Reading from the N-terminus, the 415-residue chain is D-threonate kinase (415 aa).

Substrate is bound by residues Asp-9, Arg-53, and 81–84 (KIDS). Residues Ser-251, 345 to 348 (GGET), and Gly-392 each bind ATP.

The protein belongs to the four-carbon acid sugar kinase family.

It carries out the reaction D-threonate + ATP = 4-O-phospho-D-threonate + ADP + H(+). Its function is as follows. Catalyzes the ATP-dependent phosphorylation of D-threonate to D-threonate 4-phosphate. Can also phosphorylate 4-hydroxy-L-threonine, with lower efficiency. The sequence is that of D-threonate kinase from Cupriavidus necator (strain ATCC 17699 / DSM 428 / KCTC 22496 / NCIMB 10442 / H16 / Stanier 337) (Ralstonia eutropha).